Reading from the N-terminus, the 440-residue chain is Gap junction gamma-2 protein (440 aa).

At 1 to 21 the chain is on the cytoplasmic side; sequence MTNMSWSFLTRLLEEIHNHST. Residues 22–42 form a helical membrane-spanning segment; it reads FVGKVWLTVLVVFRIVLTAVG. The Extracellular segment spans residues 43–78; the sequence is GESIYSDEQSKFTCNTRQPGCDNVCYDAFAPLSHVR. A helical membrane pass occupies residues 79–99; that stretch reads FWVFQIVVISTPSVMYLGYAV. Residues 100 to 223 are Cytoplasmic-facing; it reads HRLARASEQE…AQLVVRAAFE (124 aa). Residues 108–199 are disordered; it reads QERRRALRRR…TPGPAGQHDG (92 aa). A compositionally biased stretch (basic residues) spans 112–124; that stretch reads RALRRRPGTRRLP. The segment covering 136 to 149 has biased composition (low complexity); it reads PDTTDLGEAEPILA. A compositionally biased stretch (acidic residues) spans 150 to 173; the sequence is LEEDEDEEPGAPEGPGEDTEEERA. A helical transmembrane segment spans residues 224-244; that stretch reads VAFLVGQYLLYGFEVPPFFAC. The Extracellular segment spans residues 245 to 264; it reads SRQPCPHVVDCFVSRPTEKT. The helical transmembrane segment at 265–285 threads the bilayer; that stretch reads VFLLVMYVVSCLCLLLNLCEM. The Cytoplasmic portion of the chain corresponds to 286-440; it reads AHLGLGSAQD…SRDGKATVWI (155 aa). The interval 369-440 is disordered; the sequence is DRDSPPCAGL…SRDGKATVWI (72 aa). A Phosphoserine modification is found at serine 372. A compositionally biased stretch (low complexity) spans 388 to 401; sequence VGGLASGTGSATSG.

Belongs to the connexin family. Gamma-type subfamily. As to quaternary structure, a connexon is composed of a hexamer of connexins. Interacts with TJP1. In terms of tissue distribution, mainly expressed by oligodendrocytes in the central nervous system (at protein level).

It localises to the cell membrane. Its subcellular location is the cell junction. The protein resides in the gap junction. Its function is as follows. One gap junction consists of a cluster of closely packed pairs of transmembrane channels, the connexons, through which materials of low MW diffuse from one cell to a neighboring cell. May play a role in myelination in central and peripheral nervous systems. The protein is Gap junction gamma-2 protein (Gjc2) of Mus musculus (Mouse).